A 353-amino-acid polypeptide reads, in one-letter code: Rhodopsin (353 aa).

The Extracellular segment spans residues 1–36; it reads MNGTEGPYFYIPMLNTTGIVRSPYEYPQYYLVNPAA. 2 N-linked (GlcNAc...) asparagine glycosylation sites follow: Asn2 and Asn15. The chain crosses the membrane as a helical span at residues 37–61; sequence YAALCAYMFLLILLGFPINFLTLYV. The Cytoplasmic segment spans residues 62-73; that stretch reads TIEHKKLRTPLN. The chain crosses the membrane as a helical span at residues 74 to 96; sequence YILLNLAVANLFMVFGGFTTTMY. Residues 97 to 110 lie on the Extracellular side of the membrane; it reads TSMHGYFVLGRLGC. An intrachain disulfide couples Cys110 to Cys187. Residues 111-133 form a helical membrane-spanning segment; sequence NLEGFFATLGGEIGLWSLVVLAV. The short motif at 134–136 is the 'Ionic lock' involved in activated form stabilization element; the sequence is ERW. Topologically, residues 134-152 are cytoplasmic; that stretch reads ERWMVVCKPISNFRFTENH. Residues 153-173 traverse the membrane as a helical segment; sequence AIMGLGFTWFAASACAVPPLV. Residues 174-202 are Extracellular-facing; it reads GWSRYIPEGMQCSCGVDYYTRAEGFNNES. Asn200 is a glycosylation site (N-linked (GlcNAc...) asparagine). A helical membrane pass occupies residues 203 to 224; that stretch reads FVVYMFVCHFLIPLIVVFFCYG. Residues 225 to 252 lie on the Cytoplasmic side of the membrane; the sequence is RLLCAVKEAAAAQQESETTQRAEREVTR. A helical membrane pass occupies residues 253-274; sequence MVVIMVIAFLICWCPYAGVAWY. Residues 275 to 286 are Extracellular-facing; it reads IFSNQGSEFGPL. Residues 287-308 form a helical membrane-spanning segment; that stretch reads FMTIPAFFAKSSSIYNPLIYIF. Residue Lys296 is modified to N6-(retinylidene)lysine. Topologically, residues 309–353 are cytoplasmic; the sequence is MNKQFRHCMITTLCCGKNPFEEEEGSTTTSKTEASSASSSSVSPA. 2 S-palmitoyl cysteine lipidation sites follow: Cys322 and Cys323. The disordered stretch occupies residues 329–353; it reads EEEEGSTTTSKTEASSASSSSVSPA. The span at 334 to 353 shows a compositional bias: low complexity; that stretch reads STTTSKTEASSASSSSVSPA.

Belongs to the G-protein coupled receptor 1 family. Opsin subfamily. Post-translationally, phosphorylated on some or all of the serine and threonine residues present in the C-terminal region. In terms of processing, contains one covalently linked retinal chromophore.

The protein localises to the membrane. It is found in the cell projection. It localises to the cilium. Its subcellular location is the photoreceptor outer segment. In terms of biological role, photoreceptor required for image-forming vision at low light intensity. While most salt water fish species use retinal as chromophore, most freshwater fish use 3-dehydroretinal, or a mixture of retinal and 3-dehydroretinal. Light-induced isomerization of 11-cis to all-trans retinal triggers a conformational change that activates signaling via G-proteins. Subsequent receptor phosphorylation mediates displacement of the bound G-protein alpha subunit by arrestin and terminates signaling. The chain is Rhodopsin (rho) from Solea solea (Common sole).